The following is a 698-amino-acid chain: Polyphosphate kinase (698 aa).

Asparagine 63 is a binding site for ATP. Residues arginine 390 and arginine 420 each contribute to the Mg(2+) site. Histidine 450 (phosphohistidine intermediate) is an active-site residue. ATP contacts are provided by tyrosine 483, arginine 579, and histidine 607.

The protein belongs to the polyphosphate kinase 1 (PPK1) family. Mg(2+) is required as a cofactor. Post-translationally, an intermediate of this reaction is the autophosphorylated ppk in which a phosphate is covalently linked to a histidine residue through a N-P bond.

The catalysed reaction is [phosphate](n) + ATP = [phosphate](n+1) + ADP. Its function is as follows. Catalyzes the reversible transfer of the terminal phosphate of ATP to form a long-chain polyphosphate (polyP). The chain is Polyphosphate kinase from Xylella fastidiosa (strain Temecula1 / ATCC 700964).